Reading from the N-terminus, the 634-residue chain is Probable potassium transport system protein Kup (634 aa).

12 helical membrane-spanning segments follow: residues 21–41 (LVIG…LYTL), 58–78 (VLGI…LKYV), 110–130 (MYVV…DGVI), 147–167 (APKL…MLFL), 179–199 (AFGP…VYNM), 223–243 (WHAV…EALY), 258–278 (WQFV…ALVL), 296–316 (ALYP…QALI), 348–368 (IYVP…VIGF), 377–397 (AYGV…IIYA), 403–423 (VPAP…CAFF), and 427–447 (IIKF…LFTL).

Belongs to the HAK/KUP transporter (TC 2.A.72) family.

It is found in the cell inner membrane. The enzyme catalyses K(+)(in) + H(+)(in) = K(+)(out) + H(+)(out). Transport of potassium into the cell. Likely operates as a K(+):H(+) symporter. The sequence is that of Probable potassium transport system protein Kup from Xanthomonas axonopodis pv. citri (strain 306).